The following is a 307-amino-acid chain: Mitochondrial glycine transporter (307 aa).

Solcar repeat units follow at residues 8–87 (PRNS…MRSS), 115–199 (LTMY…SKQL), and 221–305 (TSTT…LVKR). Helical transmembrane passes span 14 to 39 (LIGG…TRIQ), 62 to 88 (GTLP…RSSL), 121 to 146 (LLTG…VRYE), 174 to 197 (GFGA…EKSK), 225 to 251 (VNTT…KTRM), and 280 to 298 (GLSM…AWGI).

Belongs to the mitochondrial carrier (TC 2.A.29) family. SLC25A38 subfamily.

Its subcellular location is the mitochondrion. The protein resides in the mitochondrion inner membrane. It carries out the reaction glycine(in) = glycine(out). Mitochondrial glycine transporter that imports glycine into the mitochondrial matrix. Plays an important role in providing glycine for the first enzymatic step in heme biosynthesis, the condensation of glycine with succinyl-CoA to produce 5-aminolevulinate (ALA) in the mitochondrial matrix. This chain is Mitochondrial glycine transporter, found in Saccharomyces cerevisiae (strain ATCC 204508 / S288c) (Baker's yeast).